The primary structure comprises 461 residues: Coronin-1A (461 aa).

Ser-2 carries the post-translational modification N-acetylserine. Ser-2 bears the Phosphoserine; by PKC mark. WD repeat units lie at residues 13 to 63 (HVFG…LVLP), 73 to 110 (NVPMVCGHTAPVLDIAWCPHNDNVIASGSEDCSVMVWE), 123 to 160 (PVVTLEGHTKRVGIVAWHPTAQNVLLSAGCDNVILVWD), 164 to 204 (GVAV…RIIE), 207 to 251 (KGTI…ALWD), 258 to 296 (PLSLQELDTSSGVLLPFFDPDTNIVYLCGKGDSSIRYFE), and 302 to 349 (PFLH…EPIA). The span at 404 to 418 (LRVNRGLDTGRKRTT) shows a compositional bias: basic and acidic residues. The interval 404-429 (LRVNRGLDTGRKRTTPEASGAPSSDA) is disordered. Position 412 is a phosphothreonine; by PKC (Thr-412). Phosphothreonine is present on Thr-418. Phosphoserine is present on Ser-422. Positions 424–460 (APSSDAISRLEEEMRKLQATVQELQKRLDRLEETVQA) form a coiled coil. At Lys-449 the chain carries N6-acetyllysine.

This sequence belongs to the WD repeat coronin family. Binds actin. Post-translationally, phosphorylation at Thr-412 by PKC strongly down-regulates the association with actin. Polyubiquitinated by RNF128 with 'Lys-48'-linked chains, leading to proteasomal degradation. As to expression, expressed in brain, thymus, spleen, bone marrow and lymph node. Low in lung and gut.

It is found in the cytoplasm. Its subcellular location is the cytoskeleton. The protein localises to the cell cortex. It localises to the cytoplasmic vesicle. The protein resides in the phagosome membrane. Functionally, may be a crucial component of the cytoskeleton of highly motile cells, functioning both in the invagination of large pieces of plasma membrane, as well as in forming protrusions of the plasma membrane involved in cell locomotion. In mycobacteria-infected macrophages, its retention on the phagosomal membrane prevents fusion between phagosomes and lysosomes. The protein is Coronin-1A (CORO1A) of Bos taurus (Bovine).